The following is a 220-amino-acid chain: Deoxyribose-phosphate aldolase (220 aa).

The active-site Proton donor/acceptor is D89. Residue K151 is the Schiff-base intermediate with acetaldehyde of the active site. Catalysis depends on K180, which acts as the Proton donor/acceptor.

Belongs to the DeoC/FbaB aldolase family. DeoC type 1 subfamily.

The protein resides in the cytoplasm. The enzyme catalyses 2-deoxy-D-ribose 5-phosphate = D-glyceraldehyde 3-phosphate + acetaldehyde. It participates in carbohydrate degradation; 2-deoxy-D-ribose 1-phosphate degradation; D-glyceraldehyde 3-phosphate and acetaldehyde from 2-deoxy-alpha-D-ribose 1-phosphate: step 2/2. In terms of biological role, catalyzes a reversible aldol reaction between acetaldehyde and D-glyceraldehyde 3-phosphate to generate 2-deoxy-D-ribose 5-phosphate. The polypeptide is Deoxyribose-phosphate aldolase (Staphylococcus carnosus (strain TM300)).